We begin with the raw amino-acid sequence, 177 residues long: CASP-like protein 5A2 (177 aa).

The Cytoplasmic segment spans residues 1–36; it reads MNASHPAVHPVGVPPAVAGQLPPRMRMKEIQGMPGT. A helical membrane pass occupies residues 37–57; it reads IGGLLLRLGQFCFALVAFSIM. The Extracellular portion of the chain corresponds to 58 to 68; sequence VSIENFSTVTA. The N-linked (GlcNAc...) asparagine glycan is linked to Asn-62. Residues 69–89 form a helical membrane-spanning segment; sequence FCYLVAATVLQCLWSLALAII. The Cytoplasmic segment spans residues 90–103; sequence DGYALLVKRSLRNS. A helical membrane pass occupies residues 104-124; it reads LLVSLLVVGDGVTATLTFAAA. Over 125–153 the chain is Extracellular; it reads CASAGITVLIGNDLRQCKENHCARYETAT. Residues 154–174 form a helical membrane-spanning segment; it reads ALAFLSWFMVSLSFILTFWLL. Over 175–177 the chain is Cytoplasmic; it reads ATR.

The protein belongs to the Casparian strip membrane proteins (CASP) family. Homodimer and heterodimers.

The protein resides in the cell membrane. The protein is CASP-like protein 5A2 of Ginkgo biloba (Ginkgo).